The sequence spans 428 residues: Adenylosuccinate synthetase (428 aa).

GTP-binding positions include 12–18 and 40–42; these read GDEGKGK and GHT. Asp-13 serves as the catalytic Proton acceptor. The Mg(2+) site is built by Asp-13 and Gly-40. IMP contacts are provided by residues 13–16, 38–41, Thr-130, Arg-144, Gln-225, Thr-240, and Arg-304; these read DEGK and NAGH. His-41 functions as the Proton donor in the catalytic mechanism. Residue 300 to 306 participates in substrate binding; the sequence is VTTGRAR. GTP is bound by residues Arg-306, 332–334, and 414–416; these read KID and SVG.

Belongs to the adenylosuccinate synthetase family. Homodimer. Requires Mg(2+) as cofactor.

The protein resides in the cytoplasm. The catalysed reaction is IMP + L-aspartate + GTP = N(6)-(1,2-dicarboxyethyl)-AMP + GDP + phosphate + 2 H(+). It participates in purine metabolism; AMP biosynthesis via de novo pathway; AMP from IMP: step 1/2. Functionally, plays an important role in the de novo pathway of purine nucleotide biosynthesis. Catalyzes the first committed step in the biosynthesis of AMP from IMP. This is Adenylosuccinate synthetase from Clostridium botulinum (strain Okra / Type B1).